Reading from the N-terminus, the 352-residue chain is Serine protease 55 (352 aa).

The signal sequence occupies residues 1–18 (MLLFSVLLLLSLVTGTQL). One can recognise a Peptidase S1 domain in the interval 68 to 300 (ITGGMEAEVG…YNLWIEKVTQ (233 aa)). A disulfide bond links Cys-93 and Cys-109. Active-site charge relay system residues include His-108 and Asp-156. 3 disulfide bridges follow: Cys-189–Cys-256, Cys-222–Cys-235, and Cys-246–Cys-276. Residue Asn-240 is glycosylated (N-linked (GlcNAc...) asparagine). The active-site Charge relay system is Ser-250. Positions 308–330 (AEKRRTSVKQKPMGSPVSGVPEP) are disordered. Residues 319–330 (PMGSPVSGVPEP) show a composition bias toward low complexity. The GPI-anchor amidated serine moiety is linked to residue Ser-325. The propeptide at 326-352 (GVPEPGSPRSWLLLCPLSHVLFRAILY) is removed in mature form.

Belongs to the peptidase S1 family. As to expression, only detected in testis. Expressed in spermatogonia, spermatocytes, spermatids, Leydig and Sertoli cells. Expressed in prostate cancer and ovarian cancer (at protein level).

Its subcellular location is the cell membrane. It localises to the cytoplasm. The protein localises to the cytosol. Functionally, probable serine protease, which plays a crucial role in the fertility of male mice including sperm migration and sperm-egg interaction. This Homo sapiens (Human) protein is Serine protease 55 (PRSS55).